Here is a 232-residue protein sequence, read N- to C-terminus: Probable intron-encoded endonuclease aI3 (232 aa).

It belongs to the LAGLIDADG endonuclease family.

Its subcellular location is the mitochondrion. In terms of biological role, mitochondrial DNA endonuclease involved in intron homing. The chain is Probable intron-encoded endonuclease aI3 (aI3) from Dictyostelium discoideum (Social amoeba).